A 338-amino-acid chain; its full sequence is Lipoate-protein ligase A (338 aa).

One can recognise a BPL/LPL catalytic domain in the interval 29 to 216 (PATQRVLFLW…AFFAHYGERV (188 aa)). ATP-binding positions include R71, 76–79 (GAVF), and K134. Position 134 (K134) interacts with (R)-lipoate.

This sequence belongs to the LplA family. As to quaternary structure, monomer.

The protein resides in the cytoplasm. It catalyses the reaction L-lysyl-[lipoyl-carrier protein] + (R)-lipoate + ATP = N(6)-[(R)-lipoyl]-L-lysyl-[lipoyl-carrier protein] + AMP + diphosphate + H(+). It participates in protein modification; protein lipoylation via exogenous pathway; protein N(6)-(lipoyl)lysine from lipoate: step 1/2. The protein operates within protein modification; protein lipoylation via exogenous pathway; protein N(6)-(lipoyl)lysine from lipoate: step 2/2. Its function is as follows. Catalyzes both the ATP-dependent activation of exogenously supplied lipoate to lipoyl-AMP and the transfer of the activated lipoyl onto the lipoyl domains of lipoate-dependent enzymes. The polypeptide is Lipoate-protein ligase A (Escherichia fergusonii (strain ATCC 35469 / DSM 13698 / CCUG 18766 / IAM 14443 / JCM 21226 / LMG 7866 / NBRC 102419 / NCTC 12128 / CDC 0568-73)).